The following is a 282-amino-acid chain: Inositol oxygenase (282 aa).

Residues 1–25 (MKDPDPSQVYRPDMDPEAAKDKGSF) form a disordered region. Residues 12-24 (PDMDPEAAKDKGS) are compositionally biased toward basic and acidic residues. Position 26 (Arg-26) interacts with substrate. Position 30 is a phosphoserine (Ser-30). 82 to 84 (DES) contributes to the substrate binding site. Fe cation contacts are provided by His-95, His-120, and Asp-121. Substrate-binding positions include Lys-124 and 138-139 (GD). Fe cation is bound by residues His-191, His-217, and Asp-250. 217–218 (HS) serves as a coordination point for substrate.

The protein belongs to the myo-inositol oxygenase family. The cofactor is Fe cation. The N-terminus is blocked. As to expression, kidney specific.

The protein localises to the cytoplasm. It carries out the reaction myo-inositol + O2 = D-glucuronate + H2O + H(+). The protein operates within polyol metabolism; myo-inositol degradation into D-glucuronate; D-glucuronate from myo-inositol: step 1/1. The protein is Inositol oxygenase (MIOX) of Sus scrofa (Pig).